The chain runs to 123 residues: Large ribosomal subunit protein bL12 (123 aa).

It belongs to the bacterial ribosomal protein bL12 family. As to quaternary structure, homodimer. Part of the ribosomal stalk of the 50S ribosomal subunit. Forms a multimeric L10(L12)X complex, where L10 forms an elongated spine to which 2 to 4 L12 dimers bind in a sequential fashion. Binds GTP-bound translation factors.

In terms of biological role, forms part of the ribosomal stalk which helps the ribosome interact with GTP-bound translation factors. Is thus essential for accurate translation. This Bacillus licheniformis (strain ATCC 14580 / DSM 13 / JCM 2505 / CCUG 7422 / NBRC 12200 / NCIMB 9375 / NCTC 10341 / NRRL NRS-1264 / Gibson 46) protein is Large ribosomal subunit protein bL12.